Here is a 674-residue protein sequence, read N- to C-terminus: DNA ligase (674 aa).

NAD(+) is bound by residues 36–40, 85–86, and Glu-116; these read DSVYD and SL. Lys-118 (N6-AMP-lysine intermediate) is an active-site residue. NAD(+) is bound by residues Arg-139, Glu-176, Lys-292, and Lys-316. Cys-410, Cys-413, Cys-428, and Cys-433 together coordinate Zn(2+). In terms of domain architecture, BRCT spans 596–674; it reads PSSGNIAGKT…EADLLKFLTN (79 aa).

It belongs to the NAD-dependent DNA ligase family. LigA subfamily. The cofactor is Mg(2+). Mn(2+) is required as a cofactor.

It catalyses the reaction NAD(+) + (deoxyribonucleotide)n-3'-hydroxyl + 5'-phospho-(deoxyribonucleotide)m = (deoxyribonucleotide)n+m + AMP + beta-nicotinamide D-nucleotide.. DNA ligase that catalyzes the formation of phosphodiester linkages between 5'-phosphoryl and 3'-hydroxyl groups in double-stranded DNA using NAD as a coenzyme and as the energy source for the reaction. It is essential for DNA replication and repair of damaged DNA. In Rippkaea orientalis (strain PCC 8801 / RF-1) (Cyanothece sp. (strain PCC 8801)), this protein is DNA ligase.